Reading from the N-terminus, the 99-residue chain is Malonate decarboxylase acyl carrier protein (99 aa).

Position 25 is an O-(phosphoribosyl dephospho-coenzyme A)serine (Ser25).

It belongs to the MdcC family. Post-translationally, covalently binds the prosthetic group of malonate decarboxylase.

The protein localises to the cytoplasm. Subunit of malonate decarboxylase, it is an acyl carrier protein to which acetyl and malonyl thioester residues are bound via a 2'-(5''-phosphoribosyl)-3'-dephospho-CoA prosthetic group and turn over during the catalytic mechanism. This chain is Malonate decarboxylase acyl carrier protein, found in Pseudomonas fluorescens (strain ATCC BAA-477 / NRRL B-23932 / Pf-5).